Reading from the N-terminus, the 110-residue chain is Transcription factor S (110 aa).

Zn(2+) contacts are provided by C4, C7, C22, C25, C71, C74, C99, and C102. A TFIIS-type zinc finger spans residues 67–107 (TKVTCPKCGNDTAYWWEMQTRAGDEPSTIFYKCTKCGYTWR).

This sequence belongs to the archaeal rpoM/eukaryotic RPA12/RPB9/RPC11 RNA polymerase family.

It localises to the chromosome. Its function is as follows. Involved in transcriptional proofreading and fidelity. Induces RNA cleavage activity in RNA polymerase (RNAP). Stimulates transcription elongation by RNAP on both naked DNA and histone-bound DNA (chromatin), facilitating transcription through the histone barrier. Stimulation depends on transcript cleavage. In the presence of TFS, the cleavage activity of RNAP truncates RNA back to position +15 in a stepwise manner by releasing mainly dinucleotides from the 3'-end of the nascent RNA. The truncated RNAs are able to continue elongation. Misincorporation of nucleotides during elongation of transcription leads to arrested elongation complexes which are rescued by TFS-promoted removal of a dinucleotide from the 3'-end. TFS is able to induce a cleavage resynthesis cycle in stalled elongation complexes (resulting from the next missing nucleotide or a reduced incorporation rate of a wrong nucleotide) preventing misincorporation and enabling proofreading in a post-incorporation manner. Pausing of elongation complexes is the main determinant of TFS-induced RNA cleavage. This chain is Transcription factor S, found in Thermococcus kodakarensis (strain ATCC BAA-918 / JCM 12380 / KOD1) (Pyrococcus kodakaraensis (strain KOD1)).